Here is a 776-residue protein sequence, read N- to C-terminus: U3 small nucleolar RNA-associated protein 4 (776 aa).

WD repeat units follow at residues 35–40 (RCRFVD), 132–169 (LPLRNYDCNSGVIWSISINDSQDKLSVGCDNGTVVLID), 178–214 (EHDTILMRQEARVLTLAWKKDDFVIGGCSDGRIRIWS), 230–266 (KVDKAKKESTLVWSVIYLPRTDQIASGDSTGSIKFWD), 271–308 (TLNQSFKAHDADVLCLTTDTDNNYVFSAGVDRKIFQFS), and 417–452 (VCKLTLKDDQNISTCSLSPDGQVLVVGRPSTTKVFH).

As to quaternary structure, interacts with snoRNA U3. Interacts with MPP10. Component of the ribosomal small subunit (SSU) processome composed of at least 40 protein subunits and snoRNA U3. In the absence of snoRNA3, forms a complex with other t-UTPs. This complex can associate with pre-18S ribosomal RNAs.

The protein resides in the nucleus. It localises to the nucleolus. Functionally, involved in nucleolar processing of pre-18S ribosomal RNA. Required for optimal pre-ribosomal RNA transcription by RNA polymerase I together with a subset of U3 proteins required for transcription (t-UTPs). The sequence is that of U3 small nucleolar RNA-associated protein 4 (UTP4) from Saccharomyces cerevisiae (strain ATCC 204508 / S288c) (Baker's yeast).